Here is a 152-residue protein sequence, read N- to C-terminus: D-aminoacyl-tRNA deacylase (152 aa).

The Gly-cisPro motif, important for rejection of L-amino acids motif lies at 138–139; sequence GP.

The protein belongs to the DTD family. Homodimer.

Its subcellular location is the cytoplasm. The enzyme catalyses glycyl-tRNA(Ala) + H2O = tRNA(Ala) + glycine + H(+). It carries out the reaction a D-aminoacyl-tRNA + H2O = a tRNA + a D-alpha-amino acid + H(+). An aminoacyl-tRNA editing enzyme that deacylates mischarged D-aminoacyl-tRNAs. Also deacylates mischarged glycyl-tRNA(Ala), protecting cells against glycine mischarging by AlaRS. Acts via tRNA-based rather than protein-based catalysis; rejects L-amino acids rather than detecting D-amino acids in the active site. By recycling D-aminoacyl-tRNA to D-amino acids and free tRNA molecules, this enzyme counteracts the toxicity associated with the formation of D-aminoacyl-tRNA entities in vivo and helps enforce protein L-homochirality. The protein is D-aminoacyl-tRNA deacylase of Chloroherpeton thalassium (strain ATCC 35110 / GB-78).